Reading from the N-terminus, the 133-residue chain is Small ribosomal subunit protein uS8 (133 aa).

Belongs to the universal ribosomal protein uS8 family. In terms of assembly, part of the 30S ribosomal subunit. Contacts proteins S5 and S12.

One of the primary rRNA binding proteins, it binds directly to 16S rRNA central domain where it helps coordinate assembly of the platform of the 30S subunit. The sequence is that of Small ribosomal subunit protein uS8 from Cyanothece sp. (strain PCC 7425 / ATCC 29141).